A 272-amino-acid chain; its full sequence is Indole-3-glycerol phosphate synthase (272 aa).

The protein belongs to the TrpC family.

It carries out the reaction 1-(2-carboxyphenylamino)-1-deoxy-D-ribulose 5-phosphate + H(+) = (1S,2R)-1-C-(indol-3-yl)glycerol 3-phosphate + CO2 + H2O. It participates in amino-acid biosynthesis; L-tryptophan biosynthesis; L-tryptophan from chorismate: step 4/5. The protein is Indole-3-glycerol phosphate synthase of Mycobacteroides abscessus (strain ATCC 19977 / DSM 44196 / CCUG 20993 / CIP 104536 / JCM 13569 / NCTC 13031 / TMC 1543 / L948) (Mycobacterium abscessus).